Here is a 252-residue protein sequence, read N- to C-terminus: Ubiquitin carboxyl-terminal hydrolase isozyme L1 (252 aa).

Met-1 carries the post-translational modification N-acetylmethionine. Positions 2-250 constitute a UCH catalytic domain; sequence QLKPMEINPE…VRFSAVALCK (249 aa). The interaction with ubiquitin stretch occupies residues 5–10; that stretch reads PMEINP. The Nucleophile role is filled by Cys-119. Phosphoserine is present on Ser-154. His-190 acts as the Proton donor in catalysis. Positions 240–245 are interaction with ubiquitin; it reads EVRFSA. The S-farnesyl cysteine moiety is linked to residue Cys-249. Positions 250 to 252 are cleaved as a propeptide — removed in mature form; sequence KAA.

The protein belongs to the peptidase C12 family. Monomer. Homodimer. Interacts with COPS5 and SNCA. In terms of processing, O-glycosylated. Neurons and cells of the diffuse neuroendocrine system and their tumors.

It localises to the cytoplasm. The protein localises to the endoplasmic reticulum membrane. The catalysed reaction is Thiol-dependent hydrolysis of ester, thioester, amide, peptide and isopeptide bonds formed by the C-terminal Gly of ubiquitin (a 76-residue protein attached to proteins as an intracellular targeting signal).. In terms of biological role, ubiquitin-protein hydrolase involved both in the processing of ubiquitin precursors and of ubiquitinated proteins. This enzyme is a thiol protease that recognizes and hydrolyzes a peptide bond at the C-terminal glycine of ubiquitin. Also binds to free monoubiquitin and may prevent its degradation in lysosomes. The homodimer may have ATP-independent ubiquitin ligase activity. The polypeptide is Ubiquitin carboxyl-terminal hydrolase isozyme L1 (UCHL1) (Bos taurus (Bovine)).